We begin with the raw amino-acid sequence, 564 residues long: Efflux pump hmp6 (564 aa).

Positions 1–25 (MEKHAEPEKSLGDKEFQEKELHEKP) are enriched in basic and acidic residues. Residues 1–46 (MEKHAEPEKSLGDKEFQEKELHEKPAPAASEDISGDSSVNKEDGPD) form a disordered region. Helical transmembrane passes span 58–78 (LAVVMFALCISNFLVALDTTI), 96–118 (VGWYTSSYLLTNCAFQLFYGKLY), 125–145 (IVFTVAMIIFEIGSLLCGVAP), 156–176 (IAGLGSAGAFSGALIIVIHSV), 186–206 (GMIVGMYGLASVAAPLIGGAF), 214–234 (WCFYINLPCGGVAIAGLLFFF), 259–279 (FGTFFFLCSMICLLLALQMGG), and 289–309 (IIVLLVLFGLLLVAFIVVQFF). Asn312 and Asn322 each carry an N-linked (GlcNAc...) asparagine glycan. 4 consecutive transmembrane segments (helical) span residues 330-350 (IYMFCVGAQFLVLVTFMPIWF), 361-383 (SGIRSLPILLSNTFCVVLAGALV), 395-415 (ASVVLTSIGAGLLTTLTVDAS), and 452-472 (IGTAVMVFVQLLGGTILVSAA).

This sequence belongs to the major facilitator superfamily. TCR/Tet family.

The protein resides in the cell membrane. Efflux pump that might be required for efficient secretion of hypothemycin or other secondary metabolies produced by the hypothemycin gene cluster. This is Efflux pump hmp6 from Hypomyces subiculosus (Nectria subiculosa).